The sequence spans 245 residues: Ribonuclease PH (245 aa).

Residues Arg86 and 124–126 (GTR) each bind phosphate.

This sequence belongs to the RNase PH family. Homohexameric ring arranged as a trimer of dimers.

The enzyme catalyses tRNA(n+1) + phosphate = tRNA(n) + a ribonucleoside 5'-diphosphate. Its function is as follows. Phosphorolytic 3'-5' exoribonuclease that plays an important role in tRNA 3'-end maturation. Removes nucleotide residues following the 3'-CCA terminus of tRNAs; can also add nucleotides to the ends of RNA molecules by using nucleoside diphosphates as substrates, but this may not be physiologically important. Probably plays a role in initiation of 16S rRNA degradation (leading to ribosome degradation) during starvation. The sequence is that of Ribonuclease PH from Bacillus anthracis (strain A0248).